Here is an 80-residue protein sequence, read N- to C-terminus: Small ribosomal subunit protein bS18 (80 aa).

This sequence belongs to the bacterial ribosomal protein bS18 family. In terms of assembly, part of the 30S ribosomal subunit. Forms a tight heterodimer with protein bS6.

Binds as a heterodimer with protein bS6 to the central domain of the 16S rRNA, where it helps stabilize the platform of the 30S subunit. In Staphylococcus haemolyticus (strain JCSC1435), this protein is Small ribosomal subunit protein bS18.